A 451-amino-acid chain; its full sequence is UDP-glycosyltransferase 76E11 (451 aa).

Residues Ser273, 332–334 (APQ), 349–357 (HCGWNSTLE), and 371–374 (SSDQ) contribute to the UDP-alpha-D-glucose site.

This sequence belongs to the UDP-glycosyltransferase family.

Its function is as follows. Possesses low quercetin 3-O-glucosyltransferase and 7-O-glucosyltransferase activities in vitro. This Arabidopsis thaliana (Mouse-ear cress) protein is UDP-glycosyltransferase 76E11 (UGT76E11).